Reading from the N-terminus, the 147-residue chain is Siroheme decarboxylase NirG subunit (147 aa).

Belongs to the Ahb/Nir family. In terms of assembly, probably forms a complex composed of NirD, NirL, NirG and NirH. All proteins are required for the total conversion of siroheme to didecarboxysiroheme.

It carries out the reaction siroheme + 2 H(+) = 12,18-didecarboxysiroheme + 2 CO2. It participates in porphyrin-containing compound metabolism. Its function is as follows. Involved in heme d1 biosynthesis. Catalyzes the decarboxylation of siroheme into didecarboxysiroheme. In Stutzerimonas stutzeri (Pseudomonas stutzeri), this protein is Siroheme decarboxylase NirG subunit.